The chain runs to 279 residues: Undecaprenyl-diphosphatase (279 aa).

The next 8 membrane-spanning stretches (helical) occupy residues 2–22, 44–64, 85–105, 113–133, 163–183, 188–208, 223–243, and 255–275; these read LIIE…TEWL, AFIE…VMLI, WQLW…AVPL, FYFM…FIWI, VLSI…AIIL, TVAA…YSGL, AQVL…LLAI, and FTIF…YSFF.

Belongs to the UppP family.

Its subcellular location is the cell membrane. It carries out the reaction di-trans,octa-cis-undecaprenyl diphosphate + H2O = di-trans,octa-cis-undecaprenyl phosphate + phosphate + H(+). In terms of biological role, catalyzes the dephosphorylation of undecaprenyl diphosphate (UPP). Confers resistance to bacitracin. This chain is Undecaprenyl-diphosphatase, found in Streptococcus pyogenes serotype M5 (strain Manfredo).